A 319-amino-acid chain; its full sequence is HTH-type transcriptional regulator YidZ (319 aa).

The HTH lysR-type domain maps to 8 to 65; that stretch reads LDLNLLLCLQLLMQERSVTKAAKRMNVTPSAVSKSLAKLRAWFDDPLFVNSPLGLSPT. Positions 25–44 form a DNA-binding region, H-T-H motif; that stretch reads VTKAAKRMNVTPSAVSKSLA.

This sequence belongs to the LysR transcriptional regulatory family.

Involved in anaerobic NO protection. The sequence is that of HTH-type transcriptional regulator YidZ from Escherichia coli O6:H1 (strain CFT073 / ATCC 700928 / UPEC).